The chain runs to 383 residues: Meiotic recombination protein SPO11-2 (383 aa).

One can recognise a Topo IIA-type catalytic domain in the interval 24–167 (LLPHEARARI…LGIMASSRGL (144 aa)). The active-site O-(5'-phospho-DNA)-tyrosine intermediate is the Tyr-124. The Mg(2+) site is built by Glu-217 and Asp-270.

Belongs to the TOP6A family. As to quaternary structure, heterotetramer of 2 SPO11 (SPO11-1 and/or SPO11-2) and 2 MTOPVIB chains. Interacts with MTOPVIB. May form a heterodimer with SPO11-1. Interacts with PRD1. Does not interact with TOP6B. The cofactor is Mg(2+). As to expression, very low expression in flowers and shoots.

It is found in the nucleus. The catalysed reaction is ATP-dependent breakage, passage and rejoining of double-stranded DNA.. In terms of biological role, component of a topoisomerase 6 complex specifically required for meiotic recombination. Together with MTOPVIB, mediates DNA cleavage that forms the double-strand breaks (DSB) that initiate meiotic recombination. The complex promotes relaxation of negative and positive supercoiled DNA and DNA decatenation through cleavage and ligation cycles. The protein is Meiotic recombination protein SPO11-2 (SPO11-2) of Arabidopsis thaliana (Mouse-ear cress).